Here is a 187-residue protein sequence, read N- to C-terminus: MAAKFIILLALFALSQASVVRRDAPLANFLQDLEKRAADIQKTFSEQFQAISNSKNVQDVNKAVKESSDVVLKQLSTLSSSLQSALTDANGKAKEALEQTRQNLEKTAEELRRAHPDVEKQANQLRDKLQAAVQSTLQETQKLAKEVAANMEQTNEKLAPKIKEAFEDFVKQAEAVQKKVHDAATKQ.

Residues 1 to 17 form the signal peptide; sequence MAAKFIILLALFALSQA. Positions 18 to 22 are excised as a propeptide; it reads SVVRR.

This sequence belongs to the insect apolipophorin-3 family. In terms of assembly, equilibrium between a soluble monomer and a bound lipoprotein form. Apolipophorin-3 associates with lipophorin during lipid loading until each particle contains 9 or 14 molecules of apolipophorin-3. Hemolymph.

The protein resides in the secreted. Its function is as follows. Assists in the loading of diacylglycerol, generated from triacylglycerol stores in the fat body through the action of adipokinetic hormone, into lipophorin, the hemolymph lipoprotein. It increases the lipid carrying capacity of lipophorin by covering the expanding hydrophobic surface resulting from diacylglycerol uptake. It thus plays a critical role in the transport of lipids during flight in several species of insects. This chain is Apolipophorin-3, found in Hyphantria cunea (Fall webworm moth).